The primary structure comprises 344 residues: tRNA N6-adenosine threonylcarbamoyltransferase (344 aa).

The Fe cation site is built by H119 and H123. Substrate contacts are provided by residues 141-145, D174, G187, D191, and N280; that span reads VVSGG. D310 provides a ligand contact to Fe cation.

The protein belongs to the KAE1 / TsaD family. It depends on Fe(2+) as a cofactor.

The protein resides in the cytoplasm. The catalysed reaction is L-threonylcarbamoyladenylate + adenosine(37) in tRNA = N(6)-L-threonylcarbamoyladenosine(37) in tRNA + AMP + H(+). Its function is as follows. Required for the formation of a threonylcarbamoyl group on adenosine at position 37 (t(6)A37) in tRNAs that read codons beginning with adenine. Is involved in the transfer of the threonylcarbamoyl moiety of threonylcarbamoyl-AMP (TC-AMP) to the N6 group of A37, together with TsaE and TsaB. TsaD likely plays a direct catalytic role in this reaction. The chain is tRNA N6-adenosine threonylcarbamoyltransferase from Listeria monocytogenes serotype 4b (strain CLIP80459).